Reading from the N-terminus, the 334-residue chain is Ferrochelatase 1 (334 aa).

Positions 201 and 282 each coordinate Fe cation.

It belongs to the ferrochelatase family.

Its subcellular location is the cytoplasm. It carries out the reaction heme b + 2 H(+) = protoporphyrin IX + Fe(2+). It functions in the pathway porphyrin-containing compound metabolism; protoheme biosynthesis; protoheme from protoporphyrin-IX: step 1/1. In terms of biological role, catalyzes the ferrous insertion into protoporphyrin IX. The sequence is that of Ferrochelatase 1 from Shewanella oneidensis (strain ATCC 700550 / JCM 31522 / CIP 106686 / LMG 19005 / NCIMB 14063 / MR-1).